Here is a 155-residue protein sequence, read N- to C-terminus: 6,7-dimethyl-8-ribityllumazine synthase (155 aa).

5-amino-6-(D-ribitylamino)uracil contacts are provided by residues Phe-22, 57-59 (AYE), and 81-83 (SVI). 86–87 (GT) provides a ligand contact to (2S)-2-hydroxy-3-oxobutyl phosphate. Catalysis depends on His-88, which acts as the Proton donor. 5-amino-6-(D-ribitylamino)uracil is bound at residue Phe-113. A (2S)-2-hydroxy-3-oxobutyl phosphate-binding site is contributed by Arg-127.

It belongs to the DMRL synthase family. Forms an icosahedral capsid composed of 60 subunits, arranged as a dodecamer of pentamers.

The enzyme catalyses (2S)-2-hydroxy-3-oxobutyl phosphate + 5-amino-6-(D-ribitylamino)uracil = 6,7-dimethyl-8-(1-D-ribityl)lumazine + phosphate + 2 H2O + H(+). The protein operates within cofactor biosynthesis; riboflavin biosynthesis; riboflavin from 2-hydroxy-3-oxobutyl phosphate and 5-amino-6-(D-ribitylamino)uracil: step 1/2. Functionally, catalyzes the formation of 6,7-dimethyl-8-ribityllumazine by condensation of 5-amino-6-(D-ribitylamino)uracil with 3,4-dihydroxy-2-butanone 4-phosphate. This is the penultimate step in the biosynthesis of riboflavin. In Photobacterium phosphoreum, this protein is 6,7-dimethyl-8-ribityllumazine synthase.